The following is a 595-amino-acid chain: Proline--tRNA ligase (595 aa).

The protein belongs to the class-II aminoacyl-tRNA synthetase family. ProS type 1 subfamily. As to quaternary structure, homodimer.

It is found in the cytoplasm. The catalysed reaction is tRNA(Pro) + L-proline + ATP = L-prolyl-tRNA(Pro) + AMP + diphosphate. Its function is as follows. Catalyzes the attachment of proline to tRNA(Pro) in a two-step reaction: proline is first activated by ATP to form Pro-AMP and then transferred to the acceptor end of tRNA(Pro). As ProRS can inadvertently accommodate and process non-cognate amino acids such as alanine and cysteine, to avoid such errors it has two additional distinct editing activities against alanine. One activity is designated as 'pretransfer' editing and involves the tRNA(Pro)-independent hydrolysis of activated Ala-AMP. The other activity is designated 'posttransfer' editing and involves deacylation of mischarged Ala-tRNA(Pro). The misacylated Cys-tRNA(Pro) is not edited by ProRS. The protein is Proline--tRNA ligase of Treponema denticola (strain ATCC 35405 / DSM 14222 / CIP 103919 / JCM 8153 / KCTC 15104).